A 357-amino-acid polypeptide reads, in one-letter code: Dual-specificity RNA methyltransferase RlmN (357 aa).

Glu-89 (proton acceptor) is an active-site residue. In terms of domain architecture, Radical SAM core spans 109 to 340 (EGEKYTVCVS…CTIRESKALD (232 aa)). Cys-116 and Cys-345 are joined by a disulfide. Cys-123, Cys-127, and Cys-130 together coordinate [4Fe-4S] cluster. S-adenosyl-L-methionine is bound by residues 173–174 (GE), Ser-203, 226–228 (SLH), and Asn-302. The active-site S-methylcysteine intermediate is Cys-345.

Belongs to the radical SAM superfamily. RlmN family. [4Fe-4S] cluster serves as cofactor.

The protein resides in the cytoplasm. It carries out the reaction adenosine(2503) in 23S rRNA + 2 reduced [2Fe-2S]-[ferredoxin] + 2 S-adenosyl-L-methionine = 2-methyladenosine(2503) in 23S rRNA + 5'-deoxyadenosine + L-methionine + 2 oxidized [2Fe-2S]-[ferredoxin] + S-adenosyl-L-homocysteine. The catalysed reaction is adenosine(37) in tRNA + 2 reduced [2Fe-2S]-[ferredoxin] + 2 S-adenosyl-L-methionine = 2-methyladenosine(37) in tRNA + 5'-deoxyadenosine + L-methionine + 2 oxidized [2Fe-2S]-[ferredoxin] + S-adenosyl-L-homocysteine. Specifically methylates position 2 of adenine 2503 in 23S rRNA and position 2 of adenine 37 in tRNAs. m2A2503 modification seems to play a crucial role in the proofreading step occurring at the peptidyl transferase center and thus would serve to optimize ribosomal fidelity. This chain is Dual-specificity RNA methyltransferase RlmN, found in Helicobacter pylori (strain G27).